Consider the following 76-residue polypeptide: Omega-conotoxin-like TxMKLT1-0141 (76 aa).

The N-terminal stretch at 1-22 is a signal peptide; it reads MKLTCMMIVAVLFLTAWTFATA. The propeptide occupies 23–50; the sequence is DDSSNGLENLFPKAHHEMKNPEASKLNE. 3 disulfides stabilise this stretch: Cys52/Cys67, Cys59/Cys70, and Cys66/Cys75.

It belongs to the conotoxin O1 superfamily. In terms of tissue distribution, expressed by the venom duct.

Its subcellular location is the secreted. Its function is as follows. Omega-conotoxins act at presynaptic membranes, they bind and block voltage-gated calcium channels (Cav). The polypeptide is Omega-conotoxin-like TxMKLT1-0141 (Conus textile (Cloth-of-gold cone)).